The sequence spans 430 residues: MLDIKQIRENPELVQEKLNRRSAAKDYDLTPILQLDERQRELESSRVQLQTRGNEISKLIPQKIKGGSDPKGEEIKALKEEGNTVKNQLSSLEPQEKEIKAQIESLLLQLPNLPSDSTPLGKDETENVEIRRWGDEYLPKIKVLPHWEIGEKLGILDFERAVKVAQSRFVNLIGAGAALERALINFMLDRQIEAGYLEVMPPILINTTSLQGTGQLPKFSEESFKCSEDELWLAPTAEVPVTNLYRDNVIEGEQLPIKHCAYTPCFRREAGSYGKDTRGLIRLHQFNKVELVKLVHPETSEAEHEALVKDAEAILQALKLPYRVIELCTGDLGFGAAKCYDIEVWLPSSDTYREISSCSNFRDFQARRANIRFKEKGKKGTQYVHTLNGSGLAIGRTMSAILENYQQEDGTIKVPEVLQPYLKREVIGKS.

An L-serine-binding site is contributed by 236–238 (TAE). 267–269 (RRE) is an ATP binding site. Position 290 (glutamate 290) interacts with L-serine. 354–357 (EISS) contacts ATP. Serine 390 is a binding site for L-serine.

The protein belongs to the class-II aminoacyl-tRNA synthetase family. Type-1 seryl-tRNA synthetase subfamily. As to quaternary structure, homodimer. The tRNA molecule binds across the dimer.

It localises to the cytoplasm. The catalysed reaction is tRNA(Ser) + L-serine + ATP = L-seryl-tRNA(Ser) + AMP + diphosphate + H(+). It catalyses the reaction tRNA(Sec) + L-serine + ATP = L-seryl-tRNA(Sec) + AMP + diphosphate + H(+). It participates in aminoacyl-tRNA biosynthesis; selenocysteinyl-tRNA(Sec) biosynthesis; L-seryl-tRNA(Sec) from L-serine and tRNA(Sec): step 1/1. In terms of biological role, catalyzes the attachment of serine to tRNA(Ser). Is also able to aminoacylate tRNA(Sec) with serine, to form the misacylated tRNA L-seryl-tRNA(Sec), which will be further converted into selenocysteinyl-tRNA(Sec). In Gloeothece citriformis (strain PCC 7424) (Cyanothece sp. (strain PCC 7424)), this protein is Serine--tRNA ligase.